The primary structure comprises 616 residues: Proline dehydrogenase 1, mitochondrial (616 aa).

It belongs to the proline oxidase family. FAD is required as a cofactor.

It is found in the mitochondrion matrix. The enzyme catalyses L-proline + a quinone = (S)-1-pyrroline-5-carboxylate + a quinol + H(+). The protein operates within amino-acid degradation; L-proline degradation into L-glutamate; L-glutamate from L-proline: step 1/2. In terms of biological role, converts proline to delta-1-pyrroline-5-carboxylate. Through proline catabolism, promotes reactive oxygen species (ROS) production and the transcription of skn-1 target genes in response to bacterial infection by P.aeruginosa. This chain is Proline dehydrogenase 1, mitochondrial, found in Caenorhabditis elegans.